We begin with the raw amino-acid sequence, 421 residues long: Forkhead box protein fkh-4 (421 aa).

The segment at residues Arg-118 to Lys-218 is a DNA-binding region (fork-head).

It is found in the nucleus. Transcription factor. Regulates expression of a class of small RNAs, known as 21U-RNAs, perhaps acting redundantly with fkh-3 and fkh-5. The polypeptide is Forkhead box protein fkh-4 (Caenorhabditis elegans).